A 66-amino-acid chain; its full sequence is Large ribosomal subunit protein bL33c (66 aa).

Belongs to the bacterial ribosomal protein bL33 family.

It is found in the plastid. Its subcellular location is the chloroplast. This Lotus japonicus (Lotus corniculatus var. japonicus) protein is Large ribosomal subunit protein bL33c.